Reading from the N-terminus, the 585-residue chain is Arginine--tRNA ligase (585 aa).

A 'HIGH' region motif is present at residues 131-141; it reads ANPTGPMHVGH.

It belongs to the class-I aminoacyl-tRNA synthetase family. Monomer.

Its subcellular location is the cytoplasm. The enzyme catalyses tRNA(Arg) + L-arginine + ATP = L-arginyl-tRNA(Arg) + AMP + diphosphate. The chain is Arginine--tRNA ligase from Allorhizobium ampelinum (strain ATCC BAA-846 / DSM 112012 / S4) (Agrobacterium vitis (strain S4)).